A 1183-amino-acid chain; its full sequence is SRC kinase signaling inhibitor 1 (1183 aa).

Residues 1-44 (MGNAPSQDPERSSPPMLSADDAEYPREYRTLGGGGGGGSGGRRF) form a disordered region. A phosphoserine mark is found at Ser-13 and Ser-18. A compositionally biased stretch (gly residues) spans 31–41 (LGGGGGGGSGG). Phosphoserine is present on Ser-45. Phosphothreonine is present on Thr-52. Phosphoserine is present on residues Ser-53, Ser-64, Ser-143, Ser-165, Ser-169, Ser-179, and Ser-225. A Phosphotyrosine modification is found at Tyr-241. Residues 284–379 (ASRESSPTRR…ERRDVKPDED (96 aa)) are disordered. The span at 286–296 (RESSPTRRLNN) shows a compositional bias: polar residues. Residues 297–306 (LSPAPHLASG) show a composition bias toward low complexity. Ser-298, Ser-307, and Ser-324 each carry phosphoserine. Residues 313-331 (PSGLPSGLQSGSPSRSRLS) are compositionally biased toward low complexity. 2 positions are modified to omega-N-methylarginine: Arg-329 and Arg-336. A phosphoserine mark is found at Ser-343, Ser-362, and Ser-364. Over residues 369–379 (LERRDVKPDED) the composition is skewed to basic and acidic residues. Position 396 is a phosphotyrosine (Tyr-396). The segment at 466 to 643 (YGFRLPPSSP…ASSTPAGQPT (178 aa)) is disordered. Positions 485-497 (PGGPPPPHSPYSG) are enriched in pro residues. Phosphoserine occurs at positions 493, 496, and 500. At Arg-501 the chain carries Omega-N-methylarginine. Phosphoserine is present on residues Ser-503, Ser-513, Ser-515, Ser-517, and Ser-522. A compositionally biased stretch (low complexity) spans 524–541 (GGKTRSAGSASTAGAPPS). Residues 562 to 574 (KDTETRERMEAME) show a composition bias toward basic and acidic residues. 2 positions are modified to phosphoserine: Ser-598 and Ser-621. Phosphothreonine is present on residues Thr-624 and Thr-637. Positions 634-643 (ASSTPAGQPT) are enriched in low complexity. The tract at residues 647-697 (RLQMQLHLRGLQNSASDLRGQLQQLRKLQLQNQESVRALLKRTEAELSMRV) is interaction with SNAP25. Coiled coils occupy residues 654–674 (LRGL…LRKL) and 726–746 (EELI…IQRD). Residues Ser-844, Ser-857, and Ser-866 each carry the phosphoserine modification. Disordered stretches follow at residues 861–907 (EMPP…KAVS) and 949–1032 (DCAS…VTSK). Thr-884 is subject to Phosphothreonine. Position 987 is a phosphoserine (Ser-987). Residues 1002-1011 (KSPPPPPPRR) are compositionally biased toward pro residues. Phosphoserine is present on residues Ser-1043 and Ser-1060. 2 disordered regions span residues 1058–1081 (AVSE…DEDD) and 1105–1183 (GASR…SISF). The segment covering 1135-1183 (QAQQQATKPSKEMSGSNETSSPVSEKPSASRTSIPVLTSFGARNSSISF) has biased composition (polar residues).

It belongs to the SRCIN1 family. As to quaternary structure, interacts with the N-terminal coiled-coil region of SNAP25. Interacts with BCAR1/p130Cas and SRC through its C-terminal domain. Interacts with CSK, CTTN, SORBS3/vinexin, SYP and MAPRE3/EB3. Tyrosine-phosphorylated in response to EGF and to cell adhesion to integrin ligands. In terms of tissue distribution, expressed in some primary breast carcinomas where its presence is significantly associated with increased tumor size. Not detected in normal breast tissue.

The protein localises to the cytoplasm. The protein resides in the cytoskeleton. It is found in the cell projection. It localises to the axon. Its subcellular location is the dendrite. The protein localises to the presynapse. The protein resides in the postsynapse. It is found in the postsynaptic density. Functionally, acts as a negative regulator of SRC by activating CSK which inhibits SRC activity and downstream signaling, leading to impaired cell spreading and migration. Regulates dendritic spine morphology. Involved in calcium-dependent exocytosis. May play a role in neurotransmitter release or synapse maintenance. In Homo sapiens (Human), this protein is SRC kinase signaling inhibitor 1.